Reading from the N-terminus, the 571-residue chain is Dual specificity testis-specific protein kinase 2 (571 aa).

Residues 58–313 (DFTCEKIGSG…EIGKTLEEIL (256 aa)) form the Protein kinase domain. Residues 64-72 (IGSGFFSEV) and Lys87 contribute to the ATP site. Asp176 functions as the Proton acceptor in the catalytic mechanism. Residue Ser219 is modified to Phosphoserine; by autocatalysis. Residues Ser369, Ser456, and Ser460 each carry the phosphoserine modification. The segment at 521–571 (ENGFGSRPQGTSPCPAGASEEMEVEERPAGSTPATFSTSGIGLQTQGKQDG) is disordered. Polar residues predominate over residues 552-571 (TPATFSTSGIGLQTQGKQDG).

It belongs to the protein kinase superfamily. TKL Ser/Thr protein kinase family. Requires Mg(2+) as cofactor. It depends on Mn(2+) as a cofactor. In terms of tissue distribution, predominantly expressed in testis and prostate. Found predominantly in non-germinal Sertoli cells.

The protein resides in the nucleus. It carries out the reaction L-seryl-[protein] + ATP = O-phospho-L-seryl-[protein] + ADP + H(+). The catalysed reaction is L-threonyl-[protein] + ATP = O-phospho-L-threonyl-[protein] + ADP + H(+). The enzyme catalyses L-tyrosyl-[protein] + ATP = O-phospho-L-tyrosyl-[protein] + ADP + H(+). With respect to regulation, activated by autophosphorylation on Ser-219. Its function is as follows. Dual specificity protein kinase activity catalyzing autophosphorylation and phosphorylation of exogenous substrates on both serine/threonine and tyrosine residues. Phosphorylates cofilin at 'Ser-3'. May play an important role in spermatogenesis. In Homo sapiens (Human), this protein is Dual specificity testis-specific protein kinase 2 (TESK2).